Consider the following 588-residue polypeptide: Myc box-dependent-interacting protein 1 (588 aa).

Residue Ala2 is modified to N-acetylalanine. Residues 2–122 are interaction with BIN2; it reads AEMGSKGVTA…DYHQKLVDQA (121 aa). 2 coiled-coil regions span residues 15 to 42 and 193 to 274; these read ASNV…TKDE and HLVA…EKQH. The BAR domain maps to 29-276; that stretch reads VLQKLGKADE…LVSLEKQHGS (248 aa). Positions 279-355 are disordered; it reads FTVKAQPSDS…PKHTPSKEMK (77 aa). Phosphoserine occurs at positions 296, 298, and 304. Thr308 is subject to Phosphothreonine. A phosphoserine mark is found at Ser324 and Ser332. A clathrin-binding region spans residues 379 to 422; the sequence is FEAPGPFSEQASLLDLDFEPLPPVASPVKAPTPSGQSIPWDLWE. Residues 448–483 are disordered; that stretch reads PSQTAEPGPAQPAEASEVVGGTQEPGETAASEATSS. Residues 474–483 show a composition bias toward low complexity; it reads ETAASEATSS. The 74-residue stretch at 515–588 folds into the SH3 domain; that stretch reads GFMFKVQAQH…FPENFTERVQ (74 aa).

Heterodimer with AMPH. Binds SH3GLB1. Interacts (via SH3 domain) with DNM1. Interacts with SYNJ1. Interacts (via SH3 domain) with DNM2. Interacts with CLTC. Interacts with AP2A2. Interacts with AP2B1. Interacts with MYC (via N-terminal transactivation domain); the interaction requires the integrity of the conserved MYC box regions 1 and 2. Interacts with BIN2. Interacts with SNX4. Interacts (via BAR domain) with BACE1. Binds (via BAR domain) F-actin. In terms of processing, phosphorylated by protein kinase C. As to expression, highly expressed in the brain and muscle. Isoform AMPH2-1 is expressed only in the brain where it is concentrated in axon initial segments and nodes of Ranvier. Isoform AMPH2-2 is widely expressed.

The protein localises to the nucleus. The protein resides in the cytoplasm. It localises to the endosome. It is found in the cell membrane. Its subcellular location is the sarcolemma. The protein localises to the T-tubule. In terms of biological role, is a key player in the control of plasma membrane curvature, and membrane shaping and remodeling. Required in muscle cells for the formation of T-tubules, tubular invaginations of the plasma membrane that function in depolarization-contraction coupling. Required in muscle cells for the formation of T-tubules, tubular invaginations of the plasma membrane that function in depolarization-contraction coupling. Is a negative regulator of endocytosis. Is also involved in the regulation of intracellular vesicles sorting, modulation of BACE1 trafficking and the control of amyloid-beta production. In neuronal circuits, endocytosis regulation may influence the internalization of PHF-tau aggregates. May be involved in the regulation of MYC activity and the control cell proliferation. The protein is Myc box-dependent-interacting protein 1 (Bin1) of Rattus norvegicus (Rat).